Reading from the N-terminus, the 436-residue chain is GTPase Der (436 aa).

EngA-type G domains are found at residues 4–167 (PTIA…PNEE) and 175–351 (IKFS…QSQN). Residues 10–17 (GRPNVGKS), 57–61 (DTGGI), 119–122 (NKVD), 181–188 (GRPNVGKS), 229–233 (DTAGM), and 294–297 (NKWD) each bind GTP. The KH-like domain occupies 352–436 (TRIPSAVLND…PIHLIARKRK (85 aa)).

It belongs to the TRAFAC class TrmE-Era-EngA-EngB-Septin-like GTPase superfamily. EngA (Der) GTPase family. Associates with the 50S ribosomal subunit.

In terms of biological role, GTPase that plays an essential role in the late steps of ribosome biogenesis. The protein is GTPase Der of Streptococcus sanguinis (strain SK36).